The sequence spans 430 residues: N-lysine methyltransferase SMYD2-A (430 aa).

The SET domain maps to 5–239; the sequence is EGLERFDSPG…AGDEVFTSYI (235 aa). Position 15 to 17 (15 to 17) interacts with S-adenosyl-L-methionine; it reads KGR. Residues Cys-50, Cys-53, Cys-63, Cys-66, Cys-72, Cys-76, His-84, and Cys-88 each coordinate Zn(2+). The MYND-type zinc-finger motif lies at 50–88; it reads CDFCFARKEGLSKCGKCKQAFYCNVDCQKGDWPMHKLEC. S-adenosyl-L-methionine is bound by residues His-135, 204-205, and 256-258; these read NH and YFF.

This sequence belongs to the class V-like SAM-binding methyltransferase superfamily.

It is found in the cytoplasm. The protein resides in the cytosol. The protein localises to the nucleus. It carries out the reaction L-lysyl(4)-[histone H3] + 3 S-adenosyl-L-methionine = N(6),N(6),N(6)-trimethyl-L-lysyl(4)-[histone H3] + 3 S-adenosyl-L-homocysteine + 3 H(+). It catalyses the reaction L-lysyl-[protein] + S-adenosyl-L-methionine = N(6)-methyl-L-lysyl-[protein] + S-adenosyl-L-homocysteine + H(+). In terms of biological role, protein-lysine N-methyltransferase that methylates both histones and non-histone proteins, including p53/TP53 and RB1. Specifically trimethylates histone H3 'Lys-4' (H3K4me3) in vivo. The activity requires interaction with HSP90alpha. Shows even higher methyltransferase activity on p53/TP53. Monomethylates 'Lys-370' of p53/TP53, leading to decreased DNA-binding activity and subsequent transcriptional regulation activity of p53/TP53. Monomethylates RB1 at 'Lys-860'. This chain is N-lysine methyltransferase SMYD2-A (smyd2-a), found in Xenopus laevis (African clawed frog).